The sequence spans 214 residues: Small ribosomal subunit protein eS6 (214 aa).

This sequence belongs to the eukaryotic ribosomal protein eS6 family.

The protein is Small ribosomal subunit protein eS6 of Saccharolobus islandicus (strain L.S.2.15 / Lassen #1) (Sulfolobus islandicus).